The sequence spans 401 residues: Phosrestin-1 (401 aa).

At S366 the chain carries Phosphoserine; by CaMK.

It belongs to the arrestin family. Post-translationally, phosphorylated upon light exposure. Expressed in photoreceptor cells.

It is found in the cell projection. The protein localises to the rhabdomere. Functionally, regulates photoreceptor cell deactivation. Arr1 and Arr2 proteins are mediators of rhodopsin inactivation and are essential for the termination of the phototransduction cascade. Involved in regulating normal cycles of per nuclear accumulation in brain circadian neurons and thus is important for normal circadian behavior. In the dark, functions with Arr1 to promote the formation of cytosolic Bdbt foci, which are required for dco localization to photoreceptor nuclei where it phosphorylates and activates degradation of per. This is Phosrestin-1 (Arr2) from Drosophila melanogaster (Fruit fly).